Reading from the N-terminus, the 432-residue chain is Amino-acid acetyltransferase (432 aa).

Residues 286–425 enclose the N-acetyltransferase domain; that stretch reads EQLREAGIED…ASLYNFQRNS (140 aa).

The protein belongs to the acetyltransferase family. ArgA subfamily.

It localises to the cytoplasm. The enzyme catalyses L-glutamate + acetyl-CoA = N-acetyl-L-glutamate + CoA + H(+). The protein operates within amino-acid biosynthesis; L-arginine biosynthesis; N(2)-acetyl-L-ornithine from L-glutamate: step 1/4. The sequence is that of Amino-acid acetyltransferase from Pseudomonas aeruginosa (strain LESB58).